We begin with the raw amino-acid sequence, 335 residues long: Large ribosomal subunit protein uL10 (335 aa).

Residues 300 to 335 (QVSEQAAEKKEEKKEEEKKGPSEEEIGGGLSSLFGG) form a disordered region. Over residues 305–321 (AAEKKEEKKEEEKKGPS) the composition is skewed to basic and acidic residues. Residues 326 to 335 (GGGLSSLFGG) show a composition bias toward gly residues.

Belongs to the universal ribosomal protein uL10 family. Part of the 50S ribosomal subunit. Forms part of the ribosomal stalk which helps the ribosome interact with GTP-bound translation factors. Forms a heptameric L10(L12)2(L12)2(L12)2 complex, where L10 forms an elongated spine to which the L12 dimers bind in a sequential fashion.

Its function is as follows. Forms part of the ribosomal stalk, playing a central role in the interaction of the ribosome with GTP-bound translation factors. This chain is Large ribosomal subunit protein uL10, found in Sulfolobus acidocaldarius (strain ATCC 33909 / DSM 639 / JCM 8929 / NBRC 15157 / NCIMB 11770).